We begin with the raw amino-acid sequence, 483 residues long: tRNA (guanine(37)-N(1))-methyltransferase (483 aa).

The tract at residues 1 to 24 is disordered; the sequence is MEEAATLQSLSISSSSPFPNNSSP. The span at 9–24 shows a compositional bias: low complexity; it reads SLSISSSSPFPNNSSP. S-adenosyl-L-methionine is bound by residues H252, 290–291, and N379; that span reads DL.

This sequence belongs to the class I-like SAM-binding methyltransferase superfamily. TRM5/TYW2 family. As to quaternary structure, monomer.

The protein resides in the mitochondrion matrix. It is found in the nucleus. Its subcellular location is the cytoplasm. The catalysed reaction is guanosine(37) in tRNA + S-adenosyl-L-methionine = N(1)-methylguanosine(37) in tRNA + S-adenosyl-L-homocysteine + H(+). Its function is as follows. Specifically methylates the N1 position of guanosine-37 in various cytoplasmic and mitochondrial tRNAs. Methylation is not dependent on the nature of the nucleoside 5' of the target nucleoside. This is the first step in the biosynthesis of wybutosine (yW), a modified base adjacent to the anticodon of tRNAs and required for accurate decoding. The polypeptide is tRNA (guanine(37)-N(1))-methyltransferase (Ajellomyces capsulatus (strain G186AR / H82 / ATCC MYA-2454 / RMSCC 2432) (Darling's disease fungus)).